The following is a 378-amino-acid chain: Putative glutamate--cysteine ligase 2 (378 aa).

The protein belongs to the glutamate--cysteine ligase type 2 family. YbdK subfamily.

The catalysed reaction is L-cysteine + L-glutamate + ATP = gamma-L-glutamyl-L-cysteine + ADP + phosphate + H(+). ATP-dependent carboxylate-amine ligase which exhibits weak glutamate--cysteine ligase activity. This Salinispora tropica (strain ATCC BAA-916 / DSM 44818 / JCM 13857 / NBRC 105044 / CNB-440) protein is Putative glutamate--cysteine ligase 2.